Consider the following 106-residue polypeptide: Immunity protein CdiI (106 aa).

Forms a contact-dependent growth inhibition complex of CdiA-CT-NC101, CdiI-NC101 and EF-Tu; the complex is a dimer of heterotrimers.

Functionally, immunity protein component of a toxin-immunity protein module, which functions as a cellular contact-dependent growth inhibition (CDI) system. CDI modules allow bacteria to communicate with and inhibit the growth of closely related neighboring bacteria in a contact-dependent fashion. Neutralizes the toxic activity of cognate toxin CdiA-NC101 (the C-terminal 154 residue CT fragment). Does not inhibit toxic activity of CdiA from other toxin-immunity modules or strains of E.coli. Mediates dimerization of the ternary CdiA-CT-NC101, CdiI-NC101 and EF-Tu complex; both CdiI molecules contact both EF-Tu molecules. The sequence is that of Immunity protein CdiI from Escherichia coli (strain NC101).